A 132-amino-acid polypeptide reads, in one-letter code: Small ribosomal subunit protein uS8 (132 aa).

Belongs to the universal ribosomal protein uS8 family. As to quaternary structure, part of the 30S ribosomal subunit. Contacts proteins S5 and S12.

Functionally, one of the primary rRNA binding proteins, it binds directly to 16S rRNA central domain where it helps coordinate assembly of the platform of the 30S subunit. This chain is Small ribosomal subunit protein uS8, found in Bacillus licheniformis (strain ATCC 14580 / DSM 13 / JCM 2505 / CCUG 7422 / NBRC 12200 / NCIMB 9375 / NCTC 10341 / NRRL NRS-1264 / Gibson 46).